A 265-amino-acid chain; its full sequence is Energy-coupling factor transporter transmembrane protein EcfT (265 aa).

6 helical membrane-spanning segments follow: residues 26 to 46 (MVFVFIMMILIFLMNNWQTYA), 47 to 67 (VGIILIFIILKASNLSFMFLF), 72 to 92 (PILFLLIFTLLMHIFLTKGGA), 107 to 127 (VIMGIMISLRFILIIFLTTIM), 152 to 172 (LPVHELALMMSIALRFIPTLM), and 243 to 263 (HTYDTLSLLTLIPITLLILYL).

This sequence belongs to the energy-coupling factor EcfT family. Forms a stable energy-coupling factor (ECF) transporter complex composed of 2 membrane-embedded substrate-binding proteins (S component), 2 ATP-binding proteins (A component) and 2 transmembrane proteins (T component). May be able to interact with more than 1 S component at a time.

Its subcellular location is the cell membrane. Transmembrane (T) component of an energy-coupling factor (ECF) ABC-transporter complex. Unlike classic ABC transporters this ECF transporter provides the energy necessary to transport a number of different substrates. The protein is Energy-coupling factor transporter transmembrane protein EcfT of Macrococcus caseolyticus (strain JCSC5402) (Macrococcoides caseolyticum).